Here is a 125-residue protein sequence, read N- to C-terminus: Large ribosomal subunit protein bL12 (125 aa).

This sequence belongs to the bacterial ribosomal protein bL12 family. In terms of assembly, homodimer. Part of the ribosomal stalk of the 50S ribosomal subunit. Forms a multimeric L10(L12)X complex, where L10 forms an elongated spine to which 2 to 4 L12 dimers bind in a sequential fashion. Binds GTP-bound translation factors.

Its function is as follows. Forms part of the ribosomal stalk which helps the ribosome interact with GTP-bound translation factors. Is thus essential for accurate translation. The chain is Large ribosomal subunit protein bL12 from Caldanaerobacter subterraneus subsp. tengcongensis (strain DSM 15242 / JCM 11007 / NBRC 100824 / MB4) (Thermoanaerobacter tengcongensis).